We begin with the raw amino-acid sequence, 316 residues long: Nucleoprotein (316 aa).

5 residues coordinate RNA: Tyr-43, Tyr-46, Val-76, Arg-122, and Lys-240.

It belongs to the tenuiviruses nucleocapsid protein family.

Its subcellular location is the virion. The protein localises to the host cytoplasm. In terms of biological role, encapsidates the genome, protecting it from nucleases. The encapsidated genomic RNA is termed the nucleocapsid (NC), and serves as template for viral transcription and replication. This Maize stripe virus (MStV) protein is Nucleoprotein.